Here is a 344-residue protein sequence, read N- to C-terminus: Centromere protein L (344 aa).

S39 is subject to Phosphoserine. Position 43 is a phosphothreonine (T43). S53 bears the Phosphoserine mark.

It belongs to the CENP-L/IML3 family. As to quaternary structure, component of the CENPA-CAD complex, composed of CENPI, CENPK, CENPL, CENPO, CENPP, CENPQ, CENPR and CENPS. The CENPA-CAD complex interacts with the CENPA-NAC complex, at least composed of CENPA, CENPC, CENPH, CENPM, CENPN, CENPT and CENPU.

Its subcellular location is the nucleus. The protein resides in the chromosome. It localises to the centromere. In terms of biological role, component of the CENPA-CAD (nucleosome distal) complex, a complex recruited to centromeres which is involved in assembly of kinetochore proteins, mitotic progression and chromosome segregation. May be involved in incorporation of newly synthesized CENPA into centromeres via its interaction with the CENPA-NAC complex. The chain is Centromere protein L (CENPL) from Homo sapiens (Human).